The following is a 530-amino-acid chain: Glucose-6-phosphate isomerase (530 aa).

The active-site Proton donor is the E356. Catalysis depends on residues H387 and K502.

The protein belongs to the GPI family.

The protein resides in the cytoplasm. It carries out the reaction alpha-D-glucose 6-phosphate = beta-D-fructose 6-phosphate. It functions in the pathway carbohydrate biosynthesis; gluconeogenesis. Its pathway is carbohydrate degradation; glycolysis; D-glyceraldehyde 3-phosphate and glycerone phosphate from D-glucose: step 2/4. Functionally, catalyzes the reversible isomerization of glucose-6-phosphate to fructose-6-phosphate. The protein is Glucose-6-phosphate isomerase of Borrelia garinii subsp. bavariensis (strain ATCC BAA-2496 / DSM 23469 / PBi) (Borreliella bavariensis).